Here is a 739-residue protein sequence, read N- to C-terminus: MSQTKQTFSTELGGRPLTIEIGQLAKQANGAALIRYGETAVLATVVASKQPKDLDFFPLTVNYEEKLYAAGKIPGGFLKREGRPGENAILTSRLIDRPIRPLFPDGFRHDIQVATTVLSSDEDNSPEVAAMIGASIALSISDIPFDGPIAGVTIGRVNGEFIINPTMSQASESDIDLQVAGTKHAVNMVEAGAKEVSEQAMLEAILLGHDVIKELIAFQEEIVAAVGQEKFAYTVASFDETLVNRLKAEALAEVTTAVQVEEKQARDLAINEVISKYIDQYAADDSITEAQLAEVSGVLNKFVKTEVRRLITEDKVRPDGRGLAEIRPLDSEIGLLPRAHGSGLFTRGQTQVLSVATLGVAGDAQIIDGLGLKAEKRFMHHYNFPPFSVGEARPMRAPGRREIGHGALGERALLPVLPSETDFPYTIRLVSEVLESNGSSSQASICGSILAMMDAGVPLKAPVAGIAMGLIKEGENYSILTDIQGMEDHLGDMDFKVAGTKDGVTALQMDMKIGGITRQILEEALEQARLGRLHILEHMNSVIAEPRVELSKYAPKIVTLKINPDKIRDVIGPGGKVINGIIDETGVKIDIDQDGTVFIASTDQDGINHARQLIEDIVREVVIGEEFDGTVRRVEKFGAFVELFKGKDALVHISELALERVGQTEDVVKLGDKLKVRVTEVDDKGRVNASHKVLLVEGMSPEDRAAYDEKKKTERDSRPPRRDTGSRPPRDGQRPPRRN.

Aspartate 488 and aspartate 494 together coordinate Mg(2+). The region spanning 555 to 614 (PKIVTLKINPDKIRDVIGPGGKVINGIIDETGVKIDIDQDGTVFIASTDQDGINHARQLI) is the KH domain. The 69-residue stretch at 624–692 (GEEFDGTVRR…DKGRVNASHK (69 aa)) folds into the S1 motif domain. The tract at residues 698–739 (GMSPEDRAAYDEKKKTERDSRPPRRDTGSRPPRDGQRPPRRN) is disordered. The segment covering 701–739 (PEDRAAYDEKKKTERDSRPPRRDTGSRPPRDGQRPPRRN) has biased composition (basic and acidic residues).

It belongs to the polyribonucleotide nucleotidyltransferase family. It depends on Mg(2+) as a cofactor.

It is found in the cytoplasm. It carries out the reaction RNA(n+1) + phosphate = RNA(n) + a ribonucleoside 5'-diphosphate. Functionally, involved in mRNA degradation. Catalyzes the phosphorolysis of single-stranded polyribonucleotides processively in the 3'- to 5'-direction. The protein is Polyribonucleotide nucleotidyltransferase of Exiguobacterium sibiricum (strain DSM 17290 / CCUG 55495 / CIP 109462 / JCM 13490 / 255-15).